A 63-amino-acid polypeptide reads, in one-letter code: MSESVRIVACPTCKAEVRWEPQSRYRPFCSERCRLIDLGQWASESYRVPAEEDHPPGETPPTH.

Zn(2+) contacts are provided by Cys-10, Cys-13, Cys-29, and Cys-33.

The protein belongs to the DNA gyrase inhibitor YacG family. Interacts with GyrB. The cofactor is Zn(2+).

In terms of biological role, inhibits all the catalytic activities of DNA gyrase by preventing its interaction with DNA. Acts by binding directly to the C-terminal domain of GyrB, which probably disrupts DNA binding by the gyrase. The polypeptide is DNA gyrase inhibitor YacG (Chromobacterium violaceum (strain ATCC 12472 / DSM 30191 / JCM 1249 / CCUG 213 / NBRC 12614 / NCIMB 9131 / NCTC 9757 / MK)).